Reading from the N-terminus, the 129-residue chain is Allergen Bra j 1-E (129 aa).

A disordered region spans residues 28 to 47 (KQAMQSGSGPQPQGPQQRPP). Residues 32–47 (QSGSGPQPQGPQQRPP) are compositionally biased toward low complexity.

The protein belongs to the 2S seed storage albumins family. In terms of assembly, the mature protein consists of a small and a large chain linked by two disulfide bonds.

In terms of biological role, this is a 2S seed storage protein. The chain is Allergen Bra j 1-E from Brassica juncea (Indian mustard).